The chain runs to 130 residues: Small ribosomal subunit protein uS8 (130 aa).

The protein belongs to the universal ribosomal protein uS8 family. Part of the 30S ribosomal subunit.

Functionally, one of the primary rRNA binding proteins, it binds directly to 16S rRNA central domain where it helps coordinate assembly of the platform of the 30S subunit. The chain is Small ribosomal subunit protein uS8 from Methanococcus maripaludis (strain C5 / ATCC BAA-1333).